The primary structure comprises 372 residues: Biotin synthase (372 aa).

The region spanning 73–308 (CCGNTVDLCS…QQIIRYAGGR (236 aa)) is the Radical SAM core domain. Residues Cys91, Cys95, and Cys98 each coordinate [4Fe-4S] cluster. Residues Cys136, Cys173, Cys233, and Arg303 each coordinate [2Fe-2S] cluster.

The protein belongs to the radical SAM superfamily. Biotin synthase family. In terms of assembly, homodimer. Requires [4Fe-4S] cluster as cofactor. It depends on [2Fe-2S] cluster as a cofactor.

It carries out the reaction (4R,5S)-dethiobiotin + (sulfur carrier)-SH + 2 reduced [2Fe-2S]-[ferredoxin] + 2 S-adenosyl-L-methionine = (sulfur carrier)-H + biotin + 2 5'-deoxyadenosine + 2 L-methionine + 2 oxidized [2Fe-2S]-[ferredoxin]. It participates in cofactor biosynthesis; biotin biosynthesis; biotin from 7,8-diaminononanoate: step 2/2. In terms of biological role, catalyzes the conversion of dethiobiotin (DTB) to biotin by the insertion of a sulfur atom into dethiobiotin via a radical-based mechanism. This Cyanothece sp. (strain PCC 7425 / ATCC 29141) protein is Biotin synthase.